We begin with the raw amino-acid sequence, 156 residues long: Endogenous retrovirus group K member 8 Pro protein (156 aa).

One can recognise a Peptidase A2 domain in the interval 21–96 (FEGLVDTGAD…IPLNLWGRDL (76 aa)). Asp26 is a catalytic residue. In terms of domain architecture, G-patch spans 111-156 (YSPTSQKIMTKRGYIPGKGLGKNEDGIKIPFEAKINQKREGIGYPF).

Belongs to the peptidase A2 family. HERV class-II K(HML-2) subfamily. In terms of assembly, active as a homodimer. In terms of processing, autoproteolytically processed at the N-terminus. Expected C-terminal autoprocessing not detected. The sequence shown is that of the processed Pro protein.

The catalysed reaction is Processing at the authentic HIV-1 PR recognition site and release of the mature p17 matrix and the p24 capsid protein, as a result of the cleavage of the -SQNY-|-PIVQ- cleavage site.. Its function is as follows. Retroviral proteases have roles in the processing of the primary translation products and the maturation of the viral particle. Endogenous Pro proteins may have kept, lost or modified their original function during evolution. The sequence is that of Endogenous retrovirus group K member 8 Pro protein (ERVK-8) from Homo sapiens (Human).